A 532-amino-acid polypeptide reads, in one-letter code: Cytochrome c oxidase subunit 1 (532 aa).

3 helical membrane-spanning segments follow: residues 1 to 21 (MWDY…AYAA), 27 to 47 (LPYM…LIWV), and 69 to 89 (GVIA…VIAF). Position 114 (histidine 114) interacts with heme b. The next 8 membrane-spanning stretches (helical) occupy residues 115–135 (TSAV…FYVV), 143–163 (LFGG…IIVT), 185–205 (LDIL…GTIF), 212–232 (IYVA…LHIV), 263–283 (GHNA…YYFV), 296–316 (LSIV…PHHL), 328–348 (LGMV…INGL), and 366–386 (MMVV…MMSI). 3 residues coordinate Cu cation: histidine 264, histidine 314, and histidine 315. Heme b is bound by residues histidine 402 and histidine 404. Helical transmembrane passes span 403 to 423 (VHSG…YFLT), 442 to 462 (FWLA…TGIM), and 496 to 516 (VGGV…WATV).

This sequence belongs to the heme-copper respiratory oxidase family. Requires Cu(2+) as cofactor. Heme b is required as a cofactor.

It is found in the cell membrane. It catalyses the reaction 4 Fe(II)-[cytochrome c] + O2 + 8 H(+)(in) = 4 Fe(III)-[cytochrome c] + 2 H2O + 4 H(+)(out). Its pathway is energy metabolism; oxidative phosphorylation. Functionally, cytochrome c oxidase is the component of the respiratory chain that catalyzes the reduction of oxygen to water. Subunits 1-3 form the functional core of the enzyme complex. Co I is the catalytic subunit of the enzyme. Electrons originating in cytochrome c are transferred via the copper A center of subunit 2 and heme a of subunit 1 to the bimetallic center formed by heme a3 and copper B. This cytochrome c oxidase shows proton pump activity across the membrane in addition to the electron transfer. This is Cytochrome c oxidase subunit 1 (ctaD) from Rhodobacter capsulatus (Rhodopseudomonas capsulata).